The following is a 430-amino-acid chain: Enolase (430 aa).

Gln-163 is a binding site for (2R)-2-phosphoglycerate. Residue Glu-205 is the Proton donor of the active site. The Mg(2+) site is built by Asp-242, Glu-287, and Asp-314. Positions 339, 368, 369, and 390 each coordinate (2R)-2-phosphoglycerate. Lys-339 acts as the Proton acceptor in catalysis.

This sequence belongs to the enolase family. Mg(2+) is required as a cofactor.

The protein localises to the cytoplasm. Its subcellular location is the secreted. It is found in the cell surface. The enzyme catalyses (2R)-2-phosphoglycerate = phosphoenolpyruvate + H2O. It functions in the pathway carbohydrate degradation; glycolysis; pyruvate from D-glyceraldehyde 3-phosphate: step 4/5. Catalyzes the reversible conversion of 2-phosphoglycerate (2-PG) into phosphoenolpyruvate (PEP). It is essential for the degradation of carbohydrates via glycolysis. The protein is Enolase of Bacillus pumilus (strain SAFR-032).